A 910-amino-acid chain; its full sequence is DNA mismatch repair protein MutS (910 aa).

Residues M1–E11 are compositionally biased toward basic and acidic residues. Positions M1 to P21 are disordered. G658–S665 lines the ATP pocket.

The protein belongs to the DNA mismatch repair MutS family.

Its function is as follows. This protein is involved in the repair of mismatches in DNA. It is possible that it carries out the mismatch recognition step. This protein has a weak ATPase activity. The polypeptide is DNA mismatch repair protein MutS (Brucella suis (strain ATCC 23445 / NCTC 10510)).